A 188-amino-acid chain; its full sequence is Holliday junction branch migration complex subunit RuvA (188 aa).

Residues 1–64 (MIAGISGRVL…QDGITLYGFS (64 aa)) are domain I. The tract at residues 65-143 (NEMKKELFLS…SAGIKDMRIY (79 aa)) is domain II. Residue Tyr143 is a region of interest, flexible linker. The segment at 143–186 (YHESLEALVSLGYPEKQAREAVKQVYREGMKTSELIKEALKFLS) is domain III.

Belongs to the RuvA family. As to quaternary structure, homotetramer. Forms an RuvA(8)-RuvB(12)-Holliday junction (HJ) complex. HJ DNA is sandwiched between 2 RuvA tetramers; dsDNA enters through RuvA and exits via RuvB. An RuvB hexamer assembles on each DNA strand where it exits the tetramer. Each RuvB hexamer is contacted by two RuvA subunits (via domain III) on 2 adjacent RuvB subunits; this complex drives branch migration. In the full resolvosome a probable DNA-RuvA(4)-RuvB(12)-RuvC(2) complex forms which resolves the HJ.

It localises to the cytoplasm. Its function is as follows. The RuvA-RuvB-RuvC complex processes Holliday junction (HJ) DNA during genetic recombination and DNA repair, while the RuvA-RuvB complex plays an important role in the rescue of blocked DNA replication forks via replication fork reversal (RFR). RuvA specifically binds to HJ cruciform DNA, conferring on it an open structure. The RuvB hexamer acts as an ATP-dependent pump, pulling dsDNA into and through the RuvAB complex. HJ branch migration allows RuvC to scan DNA until it finds its consensus sequence, where it cleaves and resolves the cruciform DNA. Promotes Holliday junction (HJ) branch migration in conjunction with RuvB. This Thermotoga maritima (strain ATCC 43589 / DSM 3109 / JCM 10099 / NBRC 100826 / MSB8) protein is Holliday junction branch migration complex subunit RuvA.